The sequence spans 685 residues: Translation initiation factor IF-2 (685 aa).

The tract at residues 60–79 (ISLAKTREPSKEKTEAKKPP) is disordered. Residues 64-79 (KTREPSKEKTEAKKPP) show a composition bias toward basic and acidic residues. The tr-type G domain maps to 175-352 (NRPPVVTVMG…DIRCIPDSPV (178 aa)). A G1 region spans residues 184–191 (GHVDHGKT). 184–191 (GHVDHGKT) lines the GTP pocket. The interval 209–213 (GITQS) is G2. The tract at residues 230 to 233 (DTPG) is G3. GTP is bound by residues 230–234 (DTPGH) and 284–287 (NKID). The interval 284–287 (NKID) is G4. The interval 321-323 (SAR) is G5.

It belongs to the TRAFAC class translation factor GTPase superfamily. Classic translation factor GTPase family. IF-2 subfamily.

The protein resides in the cytoplasm. One of the essential components for the initiation of protein synthesis. Protects formylmethionyl-tRNA from spontaneous hydrolysis and promotes its binding to the 30S ribosomal subunits. Also involved in the hydrolysis of GTP during the formation of the 70S ribosomal complex. The polypeptide is Translation initiation factor IF-2 (Fervidobacterium nodosum (strain ATCC 35602 / DSM 5306 / Rt17-B1)).